The chain runs to 264 residues: Hydroxyethylthiazole kinase (264 aa).

M52 contributes to the substrate binding site. Positions 127 and 173 each coordinate ATP. G200 contributes to the substrate binding site.

Belongs to the Thz kinase family. Mg(2+) is required as a cofactor.

It carries out the reaction 5-(2-hydroxyethyl)-4-methylthiazole + ATP = 4-methyl-5-(2-phosphooxyethyl)-thiazole + ADP + H(+). The protein operates within cofactor biosynthesis; thiamine diphosphate biosynthesis; 4-methyl-5-(2-phosphoethyl)-thiazole from 5-(2-hydroxyethyl)-4-methylthiazole: step 1/1. Catalyzes the phosphorylation of the hydroxyl group of 4-methyl-5-beta-hydroxyethylthiazole (THZ). This chain is Hydroxyethylthiazole kinase, found in Pectobacterium atrosepticum (strain SCRI 1043 / ATCC BAA-672) (Erwinia carotovora subsp. atroseptica).